A 178-amino-acid chain; its full sequence is uncharacterized protein (178 aa).

This is an uncharacterized protein from Saccharomyces cerevisiae (strain ATCC 204508 / S288c) (Baker's yeast).